A 107-amino-acid polypeptide reads, in one-letter code: Holo-[acyl-carrier-protein] synthase (107 aa).

Mg(2+)-binding residues include aspartate 10 and glutamate 54.

It belongs to the P-Pant transferase superfamily. AcpS family. Requires Mg(2+) as cofactor.

It localises to the cytoplasm. It catalyses the reaction apo-[ACP] + CoA = holo-[ACP] + adenosine 3',5'-bisphosphate + H(+). Functionally, transfers the 4'-phosphopantetheine moiety from coenzyme A to a Ser of acyl-carrier-protein. In Mycoplasma mobile (strain ATCC 43663 / 163K / NCTC 11711) (Mesomycoplasma mobile), this protein is Holo-[acyl-carrier-protein] synthase.